Consider the following 113-residue polypeptide: Death-associated protein-like 1.L (113 aa).

The disordered stretch occupies residues 1 to 57 (MAKEQKMQSSPQALKAGHLPAVKAGGMRVSKKQGNEENSAPEKNAKKTLQEKPSSVL).

This sequence belongs to the DAP-DAPL1 family. As to quaternary structure, associates with ribosomes; preventing translation. Interacts with eiF5a (eif5a and eif5a2); preventing translation.

Functionally, ribosome-binding protein that promotes ribosome hibernation, a process during which ribosomes are stabilized in an inactive state and preserved from proteasomal degradation. Acts via its association with eiF5a (eif5a and eif5a2) at the polypeptide exit tunnel of the ribosome, preventing mRNA translation. Plays a key role in ribosome hibernation in the mature egg by preventing mRNA translation, leading to ribosome inactivation. Ribosomes, which are produced in large quantities during oogenesis, are stored and translationally repressed in the egg and early embryo. The polypeptide is Death-associated protein-like 1.L (dapl1.L) (Xenopus laevis (African clawed frog)).